The following is a 395-amino-acid chain: Acid ceramidase (395 aa).

The N-terminal stretch at 1–21 (MLGRSRLTFVLLSVTVTCSVA) is a signal peptide. A disulfide bridge connects residues Cys-31 and Cys-340. The Nucleophile role is filled by Cys-143. Asn-173, Asn-259, Asn-342, and Asn-348 each carry an N-linked (GlcNAc...) asparagine glycan. An intrachain disulfide couples Cys-388 to Cys-392.

The protein belongs to the acid ceramidase family. Heterodimer; disulfide-linked. The heterodimer is composed of the disulfide-linked alpha and beta chains produced by autocatalytic cleavage of the precursor. In terms of processing, N-glycosylated. Post-translationally, proteolytically cleaved into two chains alpha and beta that remain associated via a disulfide bond. Cleavage gives rise to a conformation change that activates the enzyme. The same catalytic Cys residue mediates the autoproteolytic cleavage and subsequent hydrolysis of lipid substrates. The beta chain may undergo an additional C-terminal processing.

The protein resides in the lysosome. Its subcellular location is the secreted. The enzyme catalyses an N-acylsphing-4-enine + H2O = sphing-4-enine + a fatty acid. The catalysed reaction is N-dodecanoylsphing-4-enine + H2O = dodecanoate + sphing-4-enine. It carries out the reaction N-tetradecanoylsphing-4-enine + H2O = tetradecanoate + sphing-4-enine. It catalyses the reaction N-hexadecanoylsphing-4-enine + H2O = sphing-4-enine + hexadecanoate. The enzyme catalyses N-octadecanoylsphing-4-enine + H2O = sphing-4-enine + octadecanoate. The catalysed reaction is N-dodecanoyl-(4R)-hydroxysphinganine + H2O = (4R)-hydroxysphinganine + dodecanoate. It carries out the reaction N-(dodecanoyl)-sphinganine + H2O = dodecanoate + sphinganine. It catalyses the reaction N-(acetyl)-sphing-4-enine + H2O = sphing-4-enine + acetate. The enzyme catalyses N-(hexanoyl)sphing-4-enine + H2O = hexanoate + sphing-4-enine. The catalysed reaction is N-octanoylsphing-4-enine + H2O = octanoate + sphing-4-enine. It carries out the reaction N-(9Z-octadecenoyl)-sphing-4-enine + H2O = sphing-4-enine + (9Z)-octadecenoate. It catalyses the reaction N-dodecanoylethanolamine + H2O = dodecanoate + ethanolamine. It participates in lipid metabolism; sphingolipid metabolism. Functionally, lysosomal ceramidase that hydrolyzes sphingolipid ceramides into sphingosine and free fatty acids at acidic pH. Ceramides, sphingosine, and its phosphorylated form sphingosine-1-phosphate are bioactive lipids that mediate cellular signaling pathways regulating several biological processes including cell proliferation, apoptosis and differentiation. Has a higher catalytic efficiency towards C12-ceramides versus other ceramides. Also catalyzes the reverse reaction allowing the synthesis of ceramides from fatty acids and sphingosine. For the reverse synthetic reaction, the natural sphingosine D-erythro isomer is more efficiently utilized as a substrate compared to D-erythro-dihydrosphingosine and D-erythro-phytosphingosine, while the fatty acids with chain lengths of 12 or 14 carbons are the most efficiently used. Also has an N-acylethanolamine hydrolase activity. By regulating the levels of ceramides, sphingosine and sphingosine-1-phosphate in the epidermis, mediates the calcium-induced differentiation of epidermal keratinocytes. Also indirectly regulates tumor necrosis factor/TNF-induced apoptosis. By regulating the intracellular balance between ceramides and sphingosine, in adrenocortical cells, probably also acts as a regulator of steroidogenesis. The chain is Acid ceramidase from Balaenoptera acutorostrata scammoni (North Pacific minke whale).